Consider the following 353-residue polypeptide: Protein RecA (353 aa).

67-74 (GPESSGKT) serves as a coordination point for ATP. The interval 330-353 (SNPNSTPDFSVDDSEGVAETNEDF) is disordered. A compositionally biased stretch (acidic residues) spans 339 to 353 (SVDDSEGVAETNEDF).

The protein belongs to the RecA family.

It localises to the cytoplasm. In terms of biological role, can catalyze the hydrolysis of ATP in the presence of single-stranded DNA, the ATP-dependent uptake of single-stranded DNA by duplex DNA, and the ATP-dependent hybridization of homologous single-stranded DNAs. It interacts with LexA causing its activation and leading to its autocatalytic cleavage. In Shigella sonnei, this protein is Protein RecA.